Consider the following 85-residue polypeptide: Conotoxin Lt28.4 (85 aa).

The signal sequence occupies residues 1–21 (MPKLEMMLLVLLILPLCYIDA). The propeptide occupies 22 to 40 (VGPPPPWNMEDEIIEHWQK).

It belongs to the conotoxin D superfamily. Post-translationally, contains 5 disulfide bonds. Expressed by the venom duct.

It is found in the secreted. Probable neurotoxin. This is Conotoxin Lt28.4 from Conus litteratus (Lettered cone).